The following is a 66-amino-acid chain: Sarcoplasmic/endoplasmic reticulum calcium ATPase regulator ARLN (66 aa).

Methionine 1 carries the N-acetylmethionine modification. The interval 1-38 is disordered; sequence MEVDVPGVDGRDGLRERRGLSEGGRQNLDVRPQSGANG. Over residues 9–20 the composition is skewed to basic and acidic residues; sequence DGRDGLRERRGL. A helical transmembrane segment spans residues 45–65; sequence WLDLWLFIFFDVVVFLFVYFL.

Homooligomer. Can also form heterooligomers with other sarcoplasmic/endoplasmic reticulum calcium ATPase (SERCA) regulators ERLN, PLN, SLN and STRIT1/DWORF. Monomer. Interacts as a monomer with ATP2A2/SERCA2; the interaction results in inhibition of ATP2A2 Ca(2+) affinity.

The protein resides in the endoplasmic reticulum membrane. Functionally, inhibits the activity of the calcium ATPases ATP2A2/SERCA2 and ATP2A3/SERCA3 by decreasing their apparent affinity for Ca(2+). The polypeptide is Sarcoplasmic/endoplasmic reticulum calcium ATPase regulator ARLN (ARLN) (Pongo abelii (Sumatran orangutan)).